A 1342-amino-acid chain; its full sequence is DNA-directed RNA polymerase subunit beta (1342 aa).

This sequence belongs to the RNA polymerase beta chain family. As to quaternary structure, the RNAP catalytic core consists of 2 alpha, 1 beta, 1 beta' and 1 omega subunit. When a sigma factor is associated with the core the holoenzyme is formed, which can initiate transcription.

It carries out the reaction RNA(n) + a ribonucleoside 5'-triphosphate = RNA(n+1) + diphosphate. In terms of biological role, DNA-dependent RNA polymerase catalyzes the transcription of DNA into RNA using the four ribonucleoside triphosphates as substrates. The protein is DNA-directed RNA polymerase subunit beta of Enterobacter sp. (strain 638).